The chain runs to 443 residues: Putative transporter AmpG 1 (443 aa).

Helical transmembrane passes span 5-25, 42-62, 78-98, 104-124, 143-163, 171-191, 230-250, 254-274, 299-319, 324-344, 354-374, 393-413, and 415-435; these read SHIYIIWLFGFISGFNVMITG, IGMLSFITLPYSINFLLAPVF, LSWICLTSTTLISLIFILSFL, LVLLSFIAFIISFFSAAQDTI, GIYILGYRVGMLLASSGAIYL, AIYKIFAGVIFVYLILLILVA, FNYFKNFISAYLLKIFSGFYF, DINLAYYIILILIFLVLYRLP, VCKFCGVMGAIIGGLIGGIIM, ILYSILLFGIIHALSHIFFIL, ILFITIGVESITGGMTMTAYI, LSSMMGISRSIFPIISGYMVV, and FGWQNFFLFTTIITIPSLLIL.

This sequence belongs to the major facilitator superfamily.

The protein resides in the cell inner membrane. This chain is Putative transporter AmpG 1 (ampG1), found in Rickettsia prowazekii (strain Madrid E).